An 827-amino-acid chain; its full sequence is Cell surface glycoprotein (827 aa).

The signal sequence occupies residues 1 to 34 (MTKLKDQTRAILLATLMVTSVFAGAIAFTGSAAA). Asn-47 carries N-linked (Glc...) asparagine glycosylation. Residues 73–102 (PLLTGTAGNSEGVSLDLSSPIPQTTENQPL) show a composition bias toward polar residues. Residues 73–111 (PLLTGTAGNSEGVSLDLSSPIPQTTENQPLGTYDVDGSG) form a disordered region. Asn-117, Asn-308, Asn-313, Asn-532, and Asn-766 each carry an N-linked (Glc...) asparagine glycan. The disordered stretch occupies residues 755–804 (SEREDTTTSSDNATDTTTTTDGPTETTTTAEPTETTEEPTEETTTSSNTP). The span at 761–787 (TTSSDNATDTTTTTDGPTETTTTAEPT) shows a compositional bias: low complexity. A PGF sorting signal motif is present at residues 804-806 (PGF). The chain crosses the membrane as a helical span at residues 804-823 (PGFGIAVALVALVGAALLAL).

This sequence belongs to the halobacterial S-layer protein family. In terms of processing, O-glycosylated on 4 to 6 threonine residues; glycans consist of Glc-Gal disaccharides. Post-translationally, the N-terminus is not blocked. Cleaved by the archaeosortase ArtA at the C-terminus, with removal of a short hydrophobic segment. In terms of processing, lipidation: Following protein translocation across the membrane, the protein is modified by a derivative of mevalonic acid. Lipid modification is ArtA-dependent and requires the conserved C-terminal PGF motif. Post-translationally, asn-47 and Asn-117 are glycosylated by a pentasaccharide comprising a hexose, 2 hexuronic acids, a methyl ester of a hexuronic acid and mannose. The pentasaccharide is produced in 2 steps: first, a tetrasaccharide is built on dolichol-P and then transferred to the S-layer glycoprotein. Then, the mannose fifth sugar is attached to a distinct molecule of dolichol-P and is transferred to the protein already carrying the tetrasaccharide. The pentasaccharide on Asn-47 was initially thought to contain mannose, galactose, glucose and idose with a relative ratio of 1/3/3/0.2. However, it was later shown that it is not the case. Under low-salt conditions (1.75 M instead of 3.4 M), a tetrasaccharide consisting of a sulfated hexose, 2 hexoses and rhamnose is attached to Asn-532.

The protein localises to the secreted. The protein resides in the cell wall. Its subcellular location is the S-layer. It is found in the cell membrane. Its function is as follows. S-layer protein. The S-layer is a paracrystalline mono-layered assembly of proteins which coat the surface of the cell. This Haloferax volcanii (strain ATCC 29605 / DSM 3757 / JCM 8879 / NBRC 14742 / NCIMB 2012 / VKM B-1768 / DS2) (Halobacterium volcanii) protein is Cell surface glycoprotein (csg).